A 242-amino-acid polypeptide reads, in one-letter code: Beta-carotene ketolase (242 aa).

The enzyme catalyses all-trans-beta-carotene + 2 AH2 + 2 O2 = echinenone + 2 A + 3 H2O. The catalysed reaction is echinenone + 2 AH2 + 2 O2 = canthaxanthin + 2 A + 3 H2O. It participates in carotenoid biosynthesis; astaxanthin biosynthesis. Functionally, converts beta-carotene to canthaxanthin via echinenone. In Paracoccus sp. (strain N81106 / MBIC 01143) (Agrobacterium aurantiacum), this protein is Beta-carotene ketolase (crtW).